The sequence spans 177 residues: Large ribosomal subunit protein uL6 (177 aa).

It belongs to the universal ribosomal protein uL6 family. In terms of assembly, part of the 50S ribosomal subunit.

This protein binds to the 23S rRNA, and is important in its secondary structure. It is located near the subunit interface in the base of the L7/L12 stalk, and near the tRNA binding site of the peptidyltransferase center. The chain is Large ribosomal subunit protein uL6 from Rhizorhabdus wittichii (strain DSM 6014 / CCUG 31198 / JCM 15750 / NBRC 105917 / EY 4224 / RW1) (Sphingomonas wittichii).